Consider the following 984-residue polypeptide: Ephrin type-B receptor 1 (984 aa).

One can recognise an Eph LBD domain in the interval glutamate 1–glutamine 182. Residues glutamate 1–leucine 541 lie on the Extracellular side of the membrane. 2 Fibronectin type-III domains span residues valine 303–alanine 413 and alanine 414–aspartate 528. Residues asparagine 315, asparagine 407, and asparagine 480 are each glycosylated (N-linked (GlcNAc...) asparagine). Residues isoleucine 542–valine 562 form a helical membrane-spanning segment. Residues cysteine 563 to alanine 984 lie on the Cytoplasmic side of the membrane. In terms of domain architecture, Protein kinase spans valine 619–isoleucine 882. ATP contacts are provided by residues isoleucine 625 to valine 633 and lysine 651. Catalysis depends on aspartate 744, which acts as the Proton acceptor. In terms of domain architecture, SAM spans threonine 911 to glutamine 975. Positions serine 982–alanine 984 match the PDZ-binding motif.

This sequence belongs to the protein kinase superfamily. Tyr protein kinase family. Ephrin receptor subfamily. In terms of assembly, heterotetramer upon binding of the ligand. The heterotetramer is composed of an ephrin dimer and a receptor dimer. Oligomerization is probably required to induce biological responses. In terms of processing, phosphorylated. Autophosphorylation is stimulated by ligands. Expressed at high levels in the 10-day embryo, and in adult brain, lung, heart and skeletal muscle. Low levels of expression detected in all other adult tissues tested.

The protein localises to the cell membrane. It is found in the early endosome membrane. The protein resides in the cell projection. Its subcellular location is the dendrite. It catalyses the reaction L-tyrosyl-[protein] + ATP = O-phospho-L-tyrosyl-[protein] + ADP + H(+). Receptor tyrosine kinase which binds promiscuously transmembrane ephrin-B family ligands residing on adjacent cells, leading to contact-dependent bidirectional signaling into neighboring cells. The signaling pathway downstream of the receptor is referred to as forward signaling while the signaling pathway downstream of the ephrin ligand is referred to as reverse signaling. May play a role in axon guidance during nervous system development. May also play an important redundant role with other ephrin-B receptors in development and maturation of dendritic spines and synapse formation. More generally, may play a role in targeted cell migration and adhesion. Upon activation by ephrin-B ligands activates the MAPK/ERK and the JNK signaling cascades to regulate cell migration and adhesion respectively. The polypeptide is Ephrin type-B receptor 1 (EPHB1) (Gallus gallus (Chicken)).